A 484-amino-acid polypeptide reads, in one-letter code: MFHHADKGGKKSAFGHPVCGQIILSIILLRPPLLVTAFPVNTVEEQICKDPGFPEHGIRTPSIGKFFENSVARFSCADGFSLKGPAKIICTRFYNGSLGWKPSLKPVCLSEDCLPPFIEDADVTNRTYRPGDSLIISCHEGFQIRYPDTETMESVCQADGTWDNQPTCQGCLRPLIPPHSYMNISETKFSVPVGTVVHYQCFPGYKLEGPELLECMYNLIWSDTPPRCLDVEACSLPPMIEHGDYTCHPHPCDRYIHGTVVEYYCYPGYSLANDYKYITCQYGQWFPQMQLYCVKDETTWPGFQDSLLTTWKVVACTATSVLLALLLVITAKMFHYKCKSQQSPSDEPDESRDPNILVVDGVAVPLPSYEEAISGNYCQPPNDLPPDGLESAQHSEEQNPPSYPGHTGSQNSVPLDTGDVENCDSLSDTSECLQGLQPSSSHPGGLNMSEKTNAITSMEETASTSPSIDIADEIPLVEDGEEDC.

The N-terminal stretch at 1–35 (MFHHADKGGKKSAFGHPVCGQIILSIILLRPPLLV) is a signal peptide. Sushi domains follow at residues 46–110 (QICK…VCLS), 111–168 (EDCL…QPTC), 169–230 (QGCL…RCLD), and 232–295 (EACS…YCVK). Cystine bridges form between Cys-48–Cys-90, Cys-76–Cys-108, Cys-113–Cys-156, Cys-138–Cys-168, Cys-171–Cys-215, Cys-201–Cys-228, Cys-234–Cys-280, and Cys-265–Cys-293. N-linked (GlcNAc...) asparagine glycans are attached at residues Asn-95 and Asn-125. An N-linked (GlcNAc...) asparagine glycan is attached at Asn-183. The helical transmembrane segment at 311–331 (WKVVACTATSVLLALLLVITA) threads the bilayer. Positions 374–484 (SGNYCQPPND…PLVEDGEEDC (111 aa)) are disordered. Polar residues-rich tracts occupy residues 424 to 442 (DSLSDTSECLQGLQPSSSH) and 449 to 467 (SEKTNAITSMEETASTSPS). Residues 470–484 (IADEIPLVEDGEEDC) are compositionally biased toward acidic residues.

The protein resides in the membrane. The chain is Sushi domain-containing protein 4 (susd4) from Danio rerio (Zebrafish).